Consider the following 430-residue polypeptide: Tol-Pal system protein TolB (430 aa).

Residues 1–26 form the signal peptide; that stretch reads MSLMTKLGLRTLVASCLIAVGGAAHA.

It belongs to the TolB family. In terms of assembly, the Tol-Pal system is composed of five core proteins: the inner membrane proteins TolA, TolQ and TolR, the periplasmic protein TolB and the outer membrane protein Pal. They form a network linking the inner and outer membranes and the peptidoglycan layer.

The protein localises to the periplasm. In terms of biological role, part of the Tol-Pal system, which plays a role in outer membrane invagination during cell division and is important for maintaining outer membrane integrity. The chain is Tol-Pal system protein TolB from Paraburkholderia phytofirmans (strain DSM 17436 / LMG 22146 / PsJN) (Burkholderia phytofirmans).